A 61-amino-acid polypeptide reads, in one-letter code: MAHPKRKISKTRRDKRRTHYKAVASQFVECSNCSAPVLLHIVCPECGHYRGKLAIEKALAV.

The protein belongs to the bacterial ribosomal protein bL32 family.

This is Large ribosomal subunit protein bL32 from Cytophaga hutchinsonii (strain ATCC 33406 / DSM 1761 / CIP 103989 / NBRC 15051 / NCIMB 9469 / D465).